Here is a 75-residue protein sequence, read N- to C-terminus: Small ribosomal subunit protein bS18 (75 aa).

It belongs to the bacterial ribosomal protein bS18 family. Part of the 30S ribosomal subunit. Forms a tight heterodimer with protein bS6.

In terms of biological role, binds as a heterodimer with protein bS6 to the central domain of the 16S rRNA, where it helps stabilize the platform of the 30S subunit. This Clostridioides difficile (strain 630) (Peptoclostridium difficile) protein is Small ribosomal subunit protein bS18.